Consider the following 343-residue polypeptide: Replication initiation protein (343 aa).

A disordered region spans residues 42-61; that stretch reads ERKRTKRRRGEHSTKPKCEN.

Its function is as follows. Probably functions as an initiator for the IncI1 ColIb-P9 replicon. In Escherichia coli, this protein is Replication initiation protein (repZ).